A 253-amino-acid chain; its full sequence is Type III pantothenate kinase (253 aa).

An ATP-binding site is contributed by Asp-6–Val-13. Gly-107 to Arg-110 is a substrate binding site. The active-site Proton acceptor is the Asp-109. Asp-129 provides a ligand contact to K(+). Thr-132 is an ATP binding site. Thr-184 lines the substrate pocket.

It belongs to the type III pantothenate kinase family. In terms of assembly, homodimer. NH4(+) serves as cofactor. Requires K(+) as cofactor.

It localises to the cytoplasm. The catalysed reaction is (R)-pantothenate + ATP = (R)-4'-phosphopantothenate + ADP + H(+). It functions in the pathway cofactor biosynthesis; coenzyme A biosynthesis; CoA from (R)-pantothenate: step 1/5. Its function is as follows. Catalyzes the phosphorylation of pantothenate (Pan), the first step in CoA biosynthesis. The polypeptide is Type III pantothenate kinase (Exiguobacterium sibiricum (strain DSM 17290 / CCUG 55495 / CIP 109462 / JCM 13490 / 255-15)).